A 1587-amino-acid polypeptide reads, in one-letter code: Autophagy-related protein 2 (1587 aa).

The tract at residues 128 to 160 (NEISGSGSDSPRIPDDYTNPSSAGGNPTTNTYD) is disordered. Polar residues predominate over residues 145–159 (TNPSSAGGNPTTNTY).

This sequence belongs to the ATG2 family.

Its subcellular location is the preautophagosomal structure membrane. The protein localises to the endoplasmic reticulum membrane. It catalyses the reaction a 1,2-diacyl-sn-glycero-3-phosphocholine(in) = a 1,2-diacyl-sn-glycero-3-phosphocholine(out). The enzyme catalyses a 1,2-diacyl-sn-glycero-3-phospho-L-serine(in) = a 1,2-diacyl-sn-glycero-3-phospho-L-serine(out). It carries out the reaction a 1,2-diacyl-sn-glycero-3-phosphoethanolamine(in) = a 1,2-diacyl-sn-glycero-3-phosphoethanolamine(out). Its function is as follows. Lipid transfer protein required for autophagosome completion and peroxisome degradation. Tethers the edge of the isolation membrane (IM) to the endoplasmic reticulum (ER) and mediates direct lipid transfer from ER to IM for IM expansion. ATG2 binds to the ER exit site (ERES), which is the membrane source for autophagosome formation, using basic residues in its N-terminal region (NR) and to the expanding edge of the IM through its C-terminal region. The latter binding is assisted by an ATG18-PtdIns3P interaction. ATG2 then extracts phospholipids from the membrane source using its NR and transfers them to ATG9 to the IM through its predicted beta-sheet-rich structure for membrane expansion. The chain is Autophagy-related protein 2 (ATG2) from Candida glabrata (strain ATCC 2001 / BCRC 20586 / JCM 3761 / NBRC 0622 / NRRL Y-65 / CBS 138) (Yeast).